Here is an 879-residue protein sequence, read N- to C-terminus: JmjC domain-containing histone demethylation protein 1 (879 aa).

Disordered regions lie at residues 1–45, 117–212, and 407–449; these read MSEQ…EEGK, STSP…PKRK, and KDVK…EGLK. The PHD-type zinc finger occupies 23 to 116; that stretch reads PEPCPLCRET…KWYCAPCLAR (94 aa). 2 stretches are compositionally biased toward basic and acidic residues: residues 183 to 192 and 407 to 433; these read IDMKSEREQQ and KDVKEKGRGNDSRESSEIRKEGSHLTE. A JmjC domain is found at 416-598; sequence NDSRESSEIR…TQLRLRQIEI (183 aa). Residue Thr472 coordinates substrate. Fe cation is bound by residues His475 and Asp477. Lys492 contacts substrate. His566 serves as a coordination point for Fe cation. The tract at residues 763–879 is disordered; sequence HPPAWSENRQ…KVEEDMDIDH (117 aa). Over residues 769-782 the composition is skewed to polar residues; that stretch reads ENRQSPQIETTTVQ. The segment covering 786 to 818 has biased composition (low complexity); it reads PSTSSSDAISGSGPGASPGASANGGANENEQAE. The span at 848-864 shows a compositional bias: basic and acidic residues; the sequence is FVEKKTVWGPKLDKEKI.

Belongs to the JHDM1 histone demethylase family. Requires Fe(2+) as cofactor.

It localises to the nucleus. The enzyme catalyses N(6),N(6)-dimethyl-L-lysyl(36)-[histone H3] + 2 2-oxoglutarate + 2 O2 = L-lysyl(36)-[histone H3] + 2 formaldehyde + 2 succinate + 2 CO2. Histone demethylase that specifically demethylates 'Lys-36' of histone H3, thereby playing a central role in histone code. This chain is JmjC domain-containing histone demethylation protein 1 (JHD1), found in Cryptococcus neoformans var. neoformans serotype D (strain B-3501A) (Filobasidiella neoformans).